A 176-amino-acid polypeptide reads, in one-letter code: uncharacterized protein (176 aa).

The segment covering 15–28 has biased composition (polar residues); it reads TSSNPPASASQSTG. Disordered regions lie at residues 15–100 and 125–176; these read TSSN…TSAG and ASLR…NLGA. Positions 43-52 are enriched in basic and acidic residues; that stretch reads FIDKVTDKPS.

This is an uncharacterized protein from Homo sapiens (Human).